The sequence spans 381 residues: Anhydro-N-acetylmuramic acid kinase (381 aa).

13 to 20 (GTSLDGID) provides a ligand contact to ATP.

It belongs to the anhydro-N-acetylmuramic acid kinase family.

It carries out the reaction 1,6-anhydro-N-acetyl-beta-muramate + ATP + H2O = N-acetyl-D-muramate 6-phosphate + ADP + H(+). Its pathway is amino-sugar metabolism; 1,6-anhydro-N-acetylmuramate degradation. It functions in the pathway cell wall biogenesis; peptidoglycan recycling. Catalyzes the specific phosphorylation of 1,6-anhydro-N-acetylmuramic acid (anhMurNAc) with the simultaneous cleavage of the 1,6-anhydro ring, generating MurNAc-6-P. Is required for the utilization of anhMurNAc either imported from the medium or derived from its own cell wall murein, and thus plays a role in cell wall recycling. The chain is Anhydro-N-acetylmuramic acid kinase from Francisella tularensis subsp. novicida (strain U112).